A 157-amino-acid polypeptide reads, in one-letter code: Protein snakeskin (157 aa).

At 2 to 6 (VSVQT) the chain is on the cytoplasmic side. The chain crosses the membrane as a helical span at residues 7–27 (IATIVVKTFKIVLNIIILVLY). The Extracellular segment spans residues 28–53 (RTGYNGEFLGVGGTWNLNEEKNPDAE). A helical membrane pass occupies residues 54–74 (IVASGVIVGYLIYTLVQIVTF). Residues 75–87 (LFGTTEHKRALSE) are Cytoplasmic-facing. The helical transmembrane segment at 88–108 (IVMNFVGVFLWIAVGAVALHY) threads the bilayer. Residues 109–130 (WGGYQGEHQFQFVFAEKQVGLA) are Extracellular-facing. A helical membrane pass occupies residues 131–151 (VGALCVINGAIYLLDTALSVI). Over 152-157 (HFTKEM) the chain is Cytoplasmic.

In terms of tissue distribution, expressed in midgut epithelium (at protein level).

It localises to the apicolateral cell membrane. The protein localises to the cell junction. Its subcellular location is the septate junction. Required for assembly of smooth septate junctions (sSJs). May be important for barrier function of the midgut epithelium. This Bombyx mori (Silk moth) protein is Protein snakeskin.